We begin with the raw amino-acid sequence, 322 residues long: Corticotropin-releasing factor-binding protein (322 aa).

The N-terminal stretch at 1 to 24 is a signal peptide; that stretch reads MSPNFKLQCHFTLILLTALRGESR. 5 disulfides stabilise this stretch: C60-C81, C104-C141, C183-C205, C237-C264, and C277-C318. N204 is a glycosylation site (N-linked (GlcNAc...) asparagine).

It belongs to the CRF-binding protein family.

Its subcellular location is the secreted. Binds CRF and inactivates it. May prevent inappropriate pituitary-adrenal stimulation in pregnancy. The polypeptide is Corticotropin-releasing factor-binding protein (Crhbp) (Rattus norvegicus (Rat)).